Reading from the N-terminus, the 100-residue chain is NADH-quinone oxidoreductase subunit K (100 aa).

The next 3 membrane-spanning stretches (helical) occupy residues 4 to 24, 29 to 49, and 60 to 80; these read LQHG…GLII, LFML…FVVV, and VMFI…LALL.

It belongs to the complex I subunit 4L family. NDH-1 is composed of 13 different subunits. Subunits NuoA, H, J, K, L, M, N constitute the membrane sector of the complex.

It is found in the cell inner membrane. It carries out the reaction a quinone + NADH + 5 H(+)(in) = a quinol + NAD(+) + 4 H(+)(out). Its function is as follows. NDH-1 shuttles electrons from NADH, via FMN and iron-sulfur (Fe-S) centers, to quinones in the respiratory chain. The immediate electron acceptor for the enzyme in this species is believed to be ubiquinone. Couples the redox reaction to proton translocation (for every two electrons transferred, four hydrogen ions are translocated across the cytoplasmic membrane), and thus conserves the redox energy in a proton gradient. In Photorhabdus laumondii subsp. laumondii (strain DSM 15139 / CIP 105565 / TT01) (Photorhabdus luminescens subsp. laumondii), this protein is NADH-quinone oxidoreductase subunit K.